The chain runs to 380 residues: Queuine tRNA-ribosyltransferase (380 aa).

Aspartate 95 serves as the catalytic Proton acceptor. Substrate-binding positions include 95–99, aspartate 149, glutamine 192, and glycine 219; that span reads DSGGF. An RNA binding region spans residues 250–256; sequence GVGSADA. Aspartate 269 serves as the catalytic Nucleophile. The RNA binding; important for wobble base 34 recognition stretch occupies residues 274–278; that stretch reads TRIAR. Residues cysteine 307, cysteine 309, cysteine 312, and histidine 338 each coordinate Zn(2+).

The protein belongs to the queuine tRNA-ribosyltransferase family. As to quaternary structure, homodimer. Within each dimer, one monomer is responsible for RNA recognition and catalysis, while the other monomer binds to the replacement base PreQ1. It depends on Zn(2+) as a cofactor.

It carries out the reaction 7-aminomethyl-7-carbaguanine + guanosine(34) in tRNA = 7-aminomethyl-7-carbaguanosine(34) in tRNA + guanine. It participates in tRNA modification; tRNA-queuosine biosynthesis. Catalyzes the base-exchange of a guanine (G) residue with the queuine precursor 7-aminomethyl-7-deazaguanine (PreQ1) at position 34 (anticodon wobble position) in tRNAs with GU(N) anticodons (tRNA-Asp, -Asn, -His and -Tyr). Catalysis occurs through a double-displacement mechanism. The nucleophile active site attacks the C1' of nucleotide 34 to detach the guanine base from the RNA, forming a covalent enzyme-RNA intermediate. The proton acceptor active site deprotonates the incoming PreQ1, allowing a nucleophilic attack on the C1' of the ribose to form the product. After dissociation, two additional enzymatic reactions on the tRNA convert PreQ1 to queuine (Q), resulting in the hypermodified nucleoside queuosine (7-(((4,5-cis-dihydroxy-2-cyclopenten-1-yl)amino)methyl)-7-deazaguanosine). The protein is Queuine tRNA-ribosyltransferase of Lactiplantibacillus plantarum (strain ATCC BAA-793 / NCIMB 8826 / WCFS1) (Lactobacillus plantarum).